A 448-amino-acid polypeptide reads, in one-letter code: Probable glycine dehydrogenase (decarboxylating) subunit 1 (448 aa).

Belongs to the GcvP family. N-terminal subunit subfamily. The glycine cleavage system is composed of four proteins: P, T, L and H. In this organism, the P 'protein' is a heterodimer of two subunits.

It catalyses the reaction N(6)-[(R)-lipoyl]-L-lysyl-[glycine-cleavage complex H protein] + glycine + H(+) = N(6)-[(R)-S(8)-aminomethyldihydrolipoyl]-L-lysyl-[glycine-cleavage complex H protein] + CO2. Functionally, the glycine cleavage system catalyzes the degradation of glycine. The P protein binds the alpha-amino group of glycine through its pyridoxal phosphate cofactor; CO(2) is released and the remaining methylamine moiety is then transferred to the lipoamide cofactor of the H protein. The protein is Probable glycine dehydrogenase (decarboxylating) subunit 1 of Listeria welshimeri serovar 6b (strain ATCC 35897 / DSM 20650 / CCUG 15529 / CIP 8149 / NCTC 11857 / SLCC 5334 / V8).